The primary structure comprises 2042 residues: Protein mini spindles (2042 aa).

TOG stretches follow at residues 1–229 (MAED…VEPS) and 267–505 (MDLL…KVAG). A binds tubulin region spans residues 1 to 505 (MAEDTEYKKL…KAEIKIKVAG (505 aa)). 2 promotes microtubule polymerization regions span residues 1–516 (MAED…ASAP) and 581–1080 (TPEE…EKAR). HEAT repeat units lie at residues 120 to 157 (EKQEAVVEELVKGMEAKNPKIVSACVAATTLALREFGH), 160 to 197 (IGVKPLIKKLAPLMSDRDKTVRDEGKQLAVEIYRWIGA), 270 to 311 (LDPV…DHPK), 315 to 353 (GEYGALVSALKKVITKDSNVVLVAMAGKCLALLAKGLAK), 357 to 394 (NYASACVPSLLEKFKEKKPNVVTALREAIDAIYASTSL), 396 to 433 (AQQESIVESLSNKNPSVKSETALFIARALTRTQPTALN), and 440 to 478 (LTTSLVKTLNEPDPTVRDSSAEALGTLIKLMGDKAVTPL). The tract at residues 498 to 821 (EIKIKVAGPK…PKPVRGVQRS (324 aa)) is association with microtubule lattice. The disordered stretch occupies residues 506–572 (PKKETRPASA…PTAALKAGGK (67 aa)). Low complexity predominate over residues 513-531 (ASAPTAKAAAPAKTVAGSV). A TOG 3 region spans residues 581–814 (TPEELQEKSE…KNVGEKPPKP (234 aa)). 4 HEAT repeats span residues 587-624 (EKSEEILPAEILNGLVDSNWKNRLAAVEQLLGEISGFD), 625-662 (AKQAGISQILIRTISGRKPGLKEMNFQVLKFKLDIIRS), 672-710 (TTVDLVINEIIEKLADAKNGAAAADVLSAFAEATKLEYV), and 745-782 (LQPKTLIEDVRKGVQSTNPTVRASAIQMVGTMSMYMGK). A disordered region spans residues 804–849 (DKNVGEKPPKPVRGVQRSSGGTAGNSPDNEDDDGGAAGEEEPINMA). Polar residues predominate over residues 819-830 (QRSSGGTAGNSP). Over residues 831 to 845 (DNEDDDGGAAGEEEP) the composition is skewed to acidic residues. 2 TOG regions span residues 849–1087 (ADLL…PVKP) and 1179–1415 (TELL…KPTP). HEAT repeat units lie at residues 856-893 (DIAPQITEALLKEMSDKDWKTRNEGLTKLQAIISEARL), 896-933 (PSIGDLAPALAHRLVDSNAKIAQTTLAICEQLATAMGA), 937-974 (NHVRNLFPGFLHALGDNKSFVRAAALNCINSFGEKGGY), and 1017-1054 (EDIHSMVPHLYAHICDRNADVRKNANEAVLGIMIHLGF). A disordered region spans residues 1083-1140 (LPVKPLPKGKHQAPIPEEPKLKTVRGGGAGGAPGIQKSATARVAGGQDKQVPARKKDE). The segment at 1099 to 1428 (EEPKLKTVRG…VDVPAPQRHD (330 aa)) is association with microtubule lattice. HEAT repeat units lie at residues 1205–1242 (RYHLKVIEQLSEDLAGNSKALVCNLDLILKWLTLRFYD), 1272–1309 (NEGSSFVPHLLLKIGDPKDAVRNGVRRVLRQVILVFPF), 1311–1344 (KVFGYVMEGLKSKNARQRTECLDELTFLIESYGM), and 1346–1383 (ICPQSAVREIARQISDRDNSVRNAALNCIVQVFFLSGE). Disordered regions lie at residues 1407–1455 (AKKT…TFDQ) and 1940–1959 (NAGSTQDNRTDVNYQNNGPD). Over residues 1940-1957 (NAGSTQDNRTDVNYQNNG) the composition is skewed to polar residues.

It belongs to the TOG/XMAP215 family. As to quaternary structure, interacts with tacc, dgt6. Interacts with mv. Interacts with Patronin.

Its subcellular location is the cytoplasm. It localises to the cytoskeleton. The protein resides in the microtubule organizing center. It is found in the centrosome. The protein localises to the spindle. Its subcellular location is the perinuclear region. Binds to the plus end of microtubules and regulates microtubule dynamics and microtubule organization. Function in neurons is essential for adult survival, and is important for climbing behavior and activity. Promotes cytoplasmic microtubule nucleation and elongation. May act as a microtubule antipause factor that rapidly catalyzes the transition from pause to either growth or shrinkage. Involved in mitotic spindle elongation. Involved in the establishment of cell polarity and mitotic spindle orientation in neuroblasts. Required for maintaining the bipolarity of acentrosomal meiotic spindles; the function is dependent on tacc and involves ncd. Involved in oocyte microtubule cytoskeleton organization and bicoid mRNA localization. Seems to be involved in elongation of kinetochore-derived microtubule fibers. In fat body cells, essential component of perinuclear non-centrosomal microtubule-organizing centers (ncMTOCs) which function to accommodate the organization of microtubule (MT) networks to control nuclear positioning and dynein motor-based retrograde endosomal trafficking. Within the ncMTOCs, Msp300 and shot anchors the ncMTOC at the nuclear surface and recruits the MT minus-end regulators Patronin and Nin for assembly, anchoring and/or stabilization of circumferential and radial MTs at the ncMTOCs. Patronin, and perhaps Nin, then recruits msps to the ncMTOC where it is required for the gamma-tubulin-independent elongation and assembly of radial MTs. This is Protein mini spindles (msps) from Drosophila melanogaster (Fruit fly).